A 107-amino-acid polypeptide reads, in one-letter code: uncharacterized protein (107 aa).

A disordered region spans residues 1–32; it reads MDSLASGRWRRRRTEELPAAGDAKRACRRSEP. The segment covering 22-31 has biased composition (basic and acidic residues); sequence DAKRACRRSE.

This is an uncharacterized protein from Mus musculus (Mouse).